The chain runs to 301 residues: GTPase Era (301 aa).

An Era-type G domain is found at 4-173 (KAGFVALIGK…LECISQHLSP (170 aa)). The tract at residues 12–19 (GKPNAGKS) is G1. 12–19 (GKPNAGKS) provides a ligand contact to GTP. The G2 stretch occupies residues 38–42 (NATRK). The tract at residues 64-67 (DTPG) is G3. Residues 64–68 (DTPGL) and 122–125 (SKID) each bind GTP. Residues 122–125 (SKID) form a G4 region. The G5 stretch occupies residues 152–154 (LSA). Residues 204–280 (LSDEIPYESD…FLNLQVIAQK (77 aa)) enclose the KH type-2 domain.

This sequence belongs to the TRAFAC class TrmE-Era-EngA-EngB-Septin-like GTPase superfamily. Era GTPase family. Monomer.

The protein localises to the cytoplasm. The protein resides in the cell inner membrane. Its function is as follows. An essential GTPase that binds both GDP and GTP, with rapid nucleotide exchange. Plays a role in 16S rRNA processing and 30S ribosomal subunit biogenesis and possibly also in cell cycle regulation and energy metabolism. The sequence is that of GTPase Era from Helicobacter pylori (strain ATCC 700392 / 26695) (Campylobacter pylori).